A 664-amino-acid chain; its full sequence is Kinesin-like protein KIF2B (664 aa).

The residue at position 125 (Thr-125) is a Phosphothreonine; by PLK1. Positions 149–177 (CLREIEKLQKQREKRRRLQLEIRARRALD) form a coiled coil. At Ser-204 the chain carries Phosphoserine; by PLK1. One can recognise a Kinesin motor domain in the interval 213–543 (RICVCVRKRP…LRYANRVKEL (331 aa)). Residue 303-310 (GQTGSGKT) coordinates ATP. Residues 583-607 (VQKEEEKESDELTSTKEPAASWSRS) are disordered. The stretch at 642–663 (VLTEIQKKLQLLRDDLQKKSQA) forms a coiled coil.

This sequence belongs to the TRAFAC class myosin-kinesin ATPase superfamily. Kinesin family. MCAK/KIF2 subfamily. In terms of processing, phosphorylation at Thr-125 by PLK1 is required for activity in the correction of kinetochore-microtubules attachment errors, while phosphorylation at Ser-204 also by PLK1 is required for the kinetochore localization and activity in prometaphase.

The protein resides in the cytoplasm. Its subcellular location is the cytoskeleton. It is found in the microtubule organizing center. The protein localises to the centrosome. It localises to the spindle. The protein resides in the chromosome. Its subcellular location is the centromere. It is found in the kinetochore. Plus end-directed microtubule-dependent motor required for spindle assembly and chromosome movement. Has microtubule depolymerization activity. Plays a role in chromosome congression. The chain is Kinesin-like protein KIF2B from Rattus norvegicus (Rat).